A 1811-amino-acid chain; its full sequence is Protein virilizer homolog (1811 aa).

Alanine 2 bears the N-acetylalanine mark. A disordered region spans residues 132–302 (ISHDRDSPPP…EGDDGYEQIS (171 aa)). Phosphoserine is present on residues serine 133 and serine 138. Residues 139 to 152 (PPPPPPPPPPPQPQ) are compositionally biased toward pro residues. Over residues 160–169 (KHADGEKEDQ) the composition is skewed to basic and acidic residues. Phosphoserine is present on serine 173. Residues 174–190 (PPRPQPRGPRTPPGPPP) are compositionally biased toward pro residues. Threonine 184 carries the phosphothreonine modification. Serine 222 carries the phosphoserine modification. Residues 224-233 (DRNSVPQEGQ) are compositionally biased toward polar residues. Composition is skewed to acidic residues over residues 234–267 (YSDE…DEDD) and 274–302 (IPDD…EQIS). The residue at position 913 (tyrosine 913) is a Phosphotyrosine. Serine 1578 carries the post-translational modification Phosphoserine. Disordered stretches follow at residues 1615 to 1634 (HVVP…GIRP) and 1662 to 1811 (KEVV…SFTR). The segment covering 1688–1697 (GFSGNRGGRG) has biased composition (gly residues). Position 1707 is a phosphothreonine (threonine 1707). Arginine 1722 carries the post-translational modification Omega-N-methylarginine. Over residues 1722–1747 (RGSSWSAQNTPRGNYNESRGGQSNFN) the composition is skewed to polar residues. Residue arginine 1740 is modified to Asymmetric dimethylarginine; alternate. The residue at position 1740 (arginine 1740) is an Omega-N-methylarginine; alternate. 3 positions are modified to asymmetric dimethylarginine: arginine 1772, arginine 1774, and arginine 1792. Residues 1787-1801 (GSGGSRGKFVSGGSG) are compositionally biased toward gly residues. The span at 1802 to 1811 (RGRHVRSFTR) shows a compositional bias: basic residues.

This sequence belongs to the vir family. Component of the WMM complex, a N6-methyltransferase complex composed of a catalytic subcomplex, named MAC, and of an associated subcomplex, named MACOM. The MAC subcomplex is composed of METTL3 and METTL14. The MACOM subcomplex is composed of WTAP, ZC3H13, CBLL1/HAKAI, VIRMA, and, in some cases of RBM15 (RBM15 or RBM15B). Interacts with WTAP. Also a component of a MACOM-like complex, named WTAP complex, composed of WTAP, ZC3H13, CBLL1, VIRMA, RBM15, BCLAF1 and THRAP3. Interacts with NUDT21 and CPSF6.

The protein localises to the nucleus speckle. It is found in the nucleus. The protein resides in the nucleoplasm. It localises to the cytoplasm. In terms of biological role, associated component of the WMM complex, a complex that mediates N6-methyladenosine (m6A) methylation of RNAs, a modification that plays a role in the efficiency of mRNA splicing and RNA processing. Acts as a key regulator of m6A methylation by promoting m6A methylation of mRNAs in the 3'-UTR near the stop codon: recruits the catalytic core components METTL3 and METTL14, thereby guiding m6A methylation at specific sites. Required for mRNA polyadenylation via its role in selective m6A methylation: m6A methylation of mRNAs in the 3'-UTR near the stop codon correlating with alternative polyadenylation (APA). The protein is Protein virilizer homolog of Mus musculus (Mouse).